A 167-amino-acid chain; its full sequence is Large ribosomal subunit protein uL5 (167 aa).

The protein belongs to the universal ribosomal protein uL5 family. Part of the 50S ribosomal subunit; contacts the 5S rRNA and probably tRNA. Forms a bridge to the 30S subunit in the 70S ribosome.

This is one of the proteins that bind and probably mediate the attachment of the 5S RNA into the large ribosomal subunit, where it forms part of the central protuberance. In the 70S ribosome it contacts protein S13 of the 30S subunit (bridge B1b), connecting the 2 subunits; this bridge is implicated in subunit movement. May contact the P site tRNA; the 5S rRNA and some of its associated proteins might help stabilize positioning of ribosome-bound tRNAs. In Methanoculleus marisnigri (strain ATCC 35101 / DSM 1498 / JR1), this protein is Large ribosomal subunit protein uL5.